Reading from the N-terminus, the 344-residue chain is FCS-Like Zinc finger 10 (344 aa).

The segment at 270–314 (DFLSFCYGCSKKLGMGEDIYMYSGYKAFCSSECRSKEIDLDEEME) adopts an FLZ-type zinc-finger fold. Positions 309-320 (LDEEMEDGDEEE) are enriched in acidic residues. Positions 309-344 (LDEEMEDGDEEEAIKSVSSSDKESKKKSNGVFFTVG) are disordered.

Belongs to the FLZ family. As to quaternary structure, interacts with KIN10 and KIN11 via its FLZ-type zinc finger domain. Interacts with KINB1, KINB2 and KINB3 via its N-terminal part. Forms homodimer and heterodimer with FLZ2 and FLZ12 in vitro. Early expressed in hypocotyl and cotyledon and preferentially in the stelar region of the shoot and root. Later expressed in root-shoot junction, lateral root, old or senescing leaves and in pistil and pollen of flower buds or open flowers.

It is found in the cytoplasm. It localises to the nucleus. The protein resides in the endoplasmic reticulum. In terms of biological role, may act as an adapter to facilitate the interaction of SnRK1 complex with effector proteins, conferring tissue- and stimulus-type specific differences in the SnRK1 regulation pathway. Negatively regulates KIN10 leading to a repression of the SnRK1 signaling pathway. The chain is FCS-Like Zinc finger 10 from Arabidopsis thaliana (Mouse-ear cress).